A 359-amino-acid chain; its full sequence is Probable 2-oxoacid dependent dioxygenase (359 aa).

Residues 207-308 (KGLWMLCHCF…ISVACFFVHT (102 aa)) form the Fe2OG dioxygenase domain. 3 residues coordinate Fe cation: His-231, Asp-233, and His-287. The segment at 329–359 (PPKYRDTTSESSNHYVARKPNGNSSLDHLRI) is disordered. The span at 349–359 (NGNSSLDHLRI) shows a compositional bias: polar residues.

This sequence belongs to the iron/ascorbate-dependent oxidoreductase family. Fe(2+) is required as a cofactor. Expressed in leaves and seeds. All cultivars with seed-only-functional allele have low to non-detectable GSL-OH expression in the leaves.

The enzyme catalyses gluconapin + AH2 + O2 = progoitrin + A + H2O. In terms of biological role, necessary for the hydroxylation of but-3-enyl glucosinolate to 2-hydroxybut-3-enyl glucosinolate, which is toxic to insects, bacteria and nematodes, inhibits seed germination and produces bitter flavors. This Arabidopsis thaliana (Mouse-ear cress) protein is Probable 2-oxoacid dependent dioxygenase.